The following is a 607-amino-acid chain: SNW/SKI-interacting protein A (607 aa).

Disordered regions lie at residues 29 to 77 (ERYG…GGAF), 178 to 205 (AQPK…AAFN), 217 to 265 (EMAQ…IPPC), 327 to 434 (LQLK…DRDR), and 516 to 607 (KVMK…ERGR). Low complexity predominate over residues 35 to 49 (SAQSDAAAAAAKPSG). The tract at residues 190-353 (SKFIKYKPSQ…QKARMERTGA (164 aa)) is SNW. The span at 240–251 (PPVPVMHSPPRP) shows a compositional bias: pro residues. 2 coiled-coil regions span residues 313–349 (AREA…ARME) and 391–418 (EREA…LEAR). Composition is skewed to basic and acidic residues over residues 327 to 339 (LQLK…EQEL), 379 to 434 (EQPR…DRDR), 516 to 527 (KVMKTDRFKPDK), 535 to 550 (RSGK…KQEE), and 562 to 571 (EVKKGKKAVE).

The protein belongs to the SNW family. In terms of assembly, interacts with FLO6/SIP4. Interacts with DIS1. In terms of tissue distribution, widely expressed.

It is found in the nucleus. Its function is as follows. Acts as a positive regulator of drought and salt tolerance. Acts as a positive regulator of cell viability. This is SNW/SKI-interacting protein A from Oryza sativa subsp. japonica (Rice).